Here is a 506-residue protein sequence, read N- to C-terminus: 2-isopropylmalate synthase (506 aa).

Residues 4–266 (ILFMDTTLRD…EPSMTLKEIK (263 aa)) enclose the Pyruvate carboxyltransferase domain. Residues D13, H201, H203, and N237 each coordinate Mn(2+). The tract at residues 390–506 (NITQLQVHFV…KLKSFIQLVK (117 aa)) is regulatory domain.

The protein belongs to the alpha-IPM synthase/homocitrate synthase family. LeuA type 1 subfamily. Homodimer. Mn(2+) serves as cofactor.

The protein localises to the cytoplasm. It carries out the reaction 3-methyl-2-oxobutanoate + acetyl-CoA + H2O = (2S)-2-isopropylmalate + CoA + H(+). Its pathway is amino-acid biosynthesis; L-leucine biosynthesis; L-leucine from 3-methyl-2-oxobutanoate: step 1/4. Its function is as follows. Catalyzes the condensation of the acetyl group of acetyl-CoA with 3-methyl-2-oxobutanoate (2-ketoisovalerate) to form 3-carboxy-3-hydroxy-4-methylpentanoate (2-isopropylmalate). This is 2-isopropylmalate synthase from Bacillus thuringiensis (strain Al Hakam).